The chain runs to 99 residues: Transmembrane protein 14A (99 aa).

3 helical membrane-spanning segments follow: residues M1–K21, G24–Y44, and P79–L99.

This sequence belongs to the TMEM14 family.

Its subcellular location is the mitochondrion membrane. It localises to the endoplasmic reticulum membrane. Inhibits apoptosis via negative regulation of the mitochondrial outer membrane permeabilization involved in apoptotic signaling pathway. In Mus musculus (Mouse), this protein is Transmembrane protein 14A (Tmem14a).